Reading from the N-terminus, the 78-residue chain is Large ribosomal subunit protein bL28 (78 aa).

This sequence belongs to the bacterial ribosomal protein bL28 family.

This chain is Large ribosomal subunit protein bL28, found in Edwardsiella ictaluri (strain 93-146).